Consider the following 313-residue polypeptide: Ribosomal RNA small subunit methyltransferase H (313 aa).

Residues 35 to 37 (GGH), Asp55, Phe79, Asp101, and Gln108 each bind S-adenosyl-L-methionine.

Belongs to the methyltransferase superfamily. RsmH family.

It is found in the cytoplasm. The enzyme catalyses cytidine(1402) in 16S rRNA + S-adenosyl-L-methionine = N(4)-methylcytidine(1402) in 16S rRNA + S-adenosyl-L-homocysteine + H(+). In terms of biological role, specifically methylates the N4 position of cytidine in position 1402 (C1402) of 16S rRNA. The polypeptide is Ribosomal RNA small subunit methyltransferase H (Escherichia coli O139:H28 (strain E24377A / ETEC)).